Reading from the N-terminus, the 204-residue chain is Thiamine-phosphate synthase (204 aa).

Residues 34 to 38 and Asp-66 contribute to the 4-amino-2-methyl-5-(diphosphooxymethyl)pyrimidine site; that span reads QYRDK. Mg(2+) contacts are provided by Asp-67 and Asp-86. 4-amino-2-methyl-5-(diphosphooxymethyl)pyrimidine is bound at residue Ser-104. Position 131 to 133 (131 to 133) interacts with 2-[(2R,5Z)-2-carboxy-4-methylthiazol-5(2H)-ylidene]ethyl phosphate; it reads TST. Lys-134 contacts 4-amino-2-methyl-5-(diphosphooxymethyl)pyrimidine. Residues Gly-160 and 180–181 contribute to the 2-[(2R,5Z)-2-carboxy-4-methylthiazol-5(2H)-ylidene]ethyl phosphate site; that span reads VS.

The protein belongs to the thiamine-phosphate synthase family. It depends on Mg(2+) as a cofactor.

The catalysed reaction is 2-[(2R,5Z)-2-carboxy-4-methylthiazol-5(2H)-ylidene]ethyl phosphate + 4-amino-2-methyl-5-(diphosphooxymethyl)pyrimidine + 2 H(+) = thiamine phosphate + CO2 + diphosphate. The enzyme catalyses 2-(2-carboxy-4-methylthiazol-5-yl)ethyl phosphate + 4-amino-2-methyl-5-(diphosphooxymethyl)pyrimidine + 2 H(+) = thiamine phosphate + CO2 + diphosphate. It carries out the reaction 4-methyl-5-(2-phosphooxyethyl)-thiazole + 4-amino-2-methyl-5-(diphosphooxymethyl)pyrimidine + H(+) = thiamine phosphate + diphosphate. Its pathway is cofactor biosynthesis; thiamine diphosphate biosynthesis; thiamine phosphate from 4-amino-2-methyl-5-diphosphomethylpyrimidine and 4-methyl-5-(2-phosphoethyl)-thiazole: step 1/1. Condenses 4-methyl-5-(beta-hydroxyethyl)thiazole monophosphate (THZ-P) and 2-methyl-4-amino-5-hydroxymethyl pyrimidine pyrophosphate (HMP-PP) to form thiamine monophosphate (TMP). The polypeptide is Thiamine-phosphate synthase (Picrophilus torridus (strain ATCC 700027 / DSM 9790 / JCM 10055 / NBRC 100828 / KAW 2/3)).